Reading from the N-terminus, the 366-residue chain is Endophilin-B1 (366 aa).

Residues 1 to 30 (MNIMDFNMKKLAADAGTFLSRAVQFTEEKL) form a membrane-binding amphipathic helix region. The interval 1-37 (MNIMDFNMKKLAADAGTFLSRAVQFTEEKLGQAEKTE) is required for membrane binding. One can recognise a BAR domain in the interval 27-261 (EEKLGQAEKT…LGSFPSTFLS (235 aa)). 2 coiled-coil regions span residues 34–54 (EKTE…CTKQ) and 160–185 (KERK…AKVA). An SH3 domain is found at 306–366 (SGSRKARVLY…VPITYLELLN (61 aa)).

It belongs to the endophilin family. In terms of assembly, homodimer, and heterodimer with SH3GLB2. Binds BAX. Binds DNM1, HTT, AMPH, BIN1 and ARFGAP1.

Its subcellular location is the cytoplasm. The protein localises to the golgi apparatus membrane. The protein resides in the mitochondrion outer membrane. May be required for normal outer mitochondrial membrane dynamics. Required for coatomer-mediated retrograde transport in certain cells. May recruit other proteins to membranes with high curvature. May promote membrane fusion. The protein is Endophilin-B1 of Gallus gallus (Chicken).